Reading from the N-terminus, the 400-residue chain is Telomeric repeat-binding factor 2-interacting protein 1 (400 aa).

Ala2 bears the N-acetylalanine mark. Phosphoserine occurs at positions 36 and 43. Residues 78–101 form the BRCT domain; it reads FISTQYILDCVERNERLELEAYRL. A disordered region spans residues 105 to 126; it reads SAADTGSEAKPGALAEGAAEPE. A compositionally biased stretch (low complexity) spans 112–125; it reads EAKPGALAEGAAEP. A Glycyl lysine isopeptide (Lys-Gly) (interchain with G-Cter in SUMO2) cross-link involves residue Lys114. A Myb-like domain is found at 128–188; that stretch reads QRLAGRIAFT…SLKDRYLKHL (61 aa). A phosphoserine mark is found at Ser154 and Ser156. Lys194 is covalently cross-linked (Glycyl lysine isopeptide (Lys-Gly) (interchain with G-Cter in SUMO2)). Disordered regions lie at residues 196–244 and 264–311; these read LLGD…EEIQ and VVVD…SQPE. Phosphoserine is present on residues Ser203 and Ser206. Glycyl lysine isopeptide (Lys-Gly) (interchain with G-Cter in SUMO2) cross-links involve residues Lys208, Lys212, and Lys240. The span at 280 to 305 shows a compositional bias: acidic residues; the sequence is CDDDPPTPEEDSETQPDEEEEEEEEE. A Glycyl lysine isopeptide (Lys-Gly) (interchain with G-Cter in SUMO2) cross-link involves residue Lys373. The short motif at 384–400 is the Nuclear localization signal element; that stretch reads KKFGAQNVARRIEFRKK.

It belongs to the RAP1 family. In terms of assembly, associates with the I-kappa-B-kinase (IKK) core complex, composed of CHUK, IKBKB and IKBKG. Homodimer. Component of the shelterin complex (telosome) composed of TERF1, TERF2, TINF2, TERF2IP ACD and POT1. Interacts with TERF2 (but not TERF1) with its C-terminus. Interacts with SLX4/BTBD12. Interacts with TERF2; the interaction is direct.

The protein resides in the nucleus. It localises to the cytoplasm. Its subcellular location is the chromosome. It is found in the telomere. In terms of biological role, acts both as a regulator of telomere function and as a transcription regulator. Involved in the regulation of telomere length and protection as a component of the shelterin complex (telosome). In contrast to other components of the shelterin complex, it is dispensible for telomere capping and does not participate in the protection of telomeres against non-homologous end-joining (NHEJ)-mediated repair. Instead, it is required to negatively regulate telomere recombination and is essential for repressing homology-directed repair (HDR), which can affect telomere length. Does not bind DNA directly: recruited to telomeric double-stranded 5'-TTAGGG-3' repeats via its interaction with TERF2. Independently of its function in telomeres, also acts as a transcription regulator: recruited to extratelomeric 5'-TTAGGG-3' sites via its association with TERF2 or other factors, and regulates gene expression. When cytoplasmic, associates with the I-kappa-B-kinase (IKK) complex and acts as a regulator of the NF-kappa-B signaling by promoting IKK-mediated phosphorylation of RELA/p65, leading to activate expression of NF-kappa-B target genes. This is Telomeric repeat-binding factor 2-interacting protein 1 (TERF2IP) from Macaca fascicularis (Crab-eating macaque).